The primary structure comprises 233 residues: Small ribosomal subunit protein uS2 (233 aa).

This sequence belongs to the universal ribosomal protein uS2 family.

The protein is Small ribosomal subunit protein uS2 of Bacillus anthracis.